The chain runs to 31 residues: Cyclotide vibi-G (31 aa).

Residues G1 to N31 constitute a cross-link (cyclopeptide (Gly-Asn)). Intrachain disulfides connect C5–C21, C9–C23, and C14–C28.

This is a cyclic peptide.

Probably participates in a plant defense mechanism. Has cytotoxic activity, active against a human lymphoma cell line with an IC(50) of 0.96 uM. The sequence is that of Cyclotide vibi-G from Viola biflora (Yellow wood violet).